A 362-amino-acid chain; its full sequence is 3-dehydroquinate synthase (362 aa).

NAD(+)-binding positions include 71–76 (DGEQYK), 105–109 (GVIGD), 129–130 (TT), K142, K151, and 169–172 (CLKT). Residues E184, H247, and H264 each contribute to the Zn(2+) site.

The protein belongs to the sugar phosphate cyclases superfamily. Dehydroquinate synthase family. Co(2+) serves as cofactor. The cofactor is Zn(2+). Requires NAD(+) as cofactor.

It is found in the cytoplasm. The catalysed reaction is 7-phospho-2-dehydro-3-deoxy-D-arabino-heptonate = 3-dehydroquinate + phosphate. It functions in the pathway metabolic intermediate biosynthesis; chorismate biosynthesis; chorismate from D-erythrose 4-phosphate and phosphoenolpyruvate: step 2/7. Functionally, catalyzes the conversion of 3-deoxy-D-arabino-heptulosonate 7-phosphate (DAHP) to dehydroquinate (DHQ). This is 3-dehydroquinate synthase from Salmonella enteritidis PT4 (strain P125109).